A 442-amino-acid polypeptide reads, in one-letter code: Adenylosuccinate synthetase (442 aa).

GTP is bound by residues 25 to 31 (GDEGKGK), 53 to 55 (GHT), and lysine 62. The active-site Proton acceptor is aspartate 26. Mg(2+)-binding residues include aspartate 26 and glycine 53. Residues 26 to 29 (DEGK) and 51 to 54 (NAGH) contribute to the IMP site. Residue histidine 54 is the Proton donor of the active site. Residues threonine 141, arginine 155, asparagine 232, and threonine 247 each coordinate IMP. GTP is bound at residue threonine 307. Substrate is bound at residue 307-313 (TTTKRPR). Residue arginine 311 coordinates IMP. GTP is bound by residues arginine 313, 339-341 (KLD), and 425-427 (GVG).

This sequence belongs to the adenylosuccinate synthetase family. As to quaternary structure, homodimer. The cofactor is Mg(2+).

It is found in the cytoplasm. The enzyme catalyses IMP + L-aspartate + GTP = N(6)-(1,2-dicarboxyethyl)-AMP + GDP + phosphate + 2 H(+). It functions in the pathway purine metabolism; AMP biosynthesis via de novo pathway; AMP from IMP: step 1/2. With respect to regulation, inhibited by hadacidin. Activated by fructose 1,6-bisphosphate. Plays an important role in the salvage pathway for purine nucleotide biosynthesis. Catalyzes the first committed step in the biosynthesis of AMP from IMP. In Plasmodium falciparum, this protein is Adenylosuccinate synthetase (Adss).